We begin with the raw amino-acid sequence, 342 residues long: L-lysine 2,3-aminomutase (342 aa).

Residues 106–329 (HKYHNRALLL…PKLAREIGGE (224 aa)) form the Radical SAM core domain. Positions 120, 124, and 127 each coordinate [4Fe-4S] cluster. The residue at position 332 (lysine 332) is an N6-(pyridoxal phosphate)lysine.

The protein belongs to the radical SAM superfamily. KamA family. [4Fe-4S] cluster serves as cofactor. Requires pyridoxal 5'-phosphate as cofactor.

The catalysed reaction is L-lysine = D-beta-lysine. Functionally, with EpmA is involved in the beta-lysylation step of the post-translational modification of translation elongation factor P (EF-P) on 'Lys-34'. EpmB appears to act before EpmA. Displays lysine 2,3-aminomutase activity, producing (R)-beta-lysine from (S)-alpha-lysine (L-lysine). Cannot use (S)-ornithine or (R)-alpha-lysine as a substrate. The polypeptide is L-lysine 2,3-aminomutase (epmB) (Escherichia coli (strain K12)).